The primary structure comprises 812 residues: Endogenous retrovirus group K member 18 Pol protein (812 aa).

Residues leucine 57–isoleucine 245 form the Reverse transcriptase domain. The short motif at leucine 161 to glycine 164 is the LPQG element. The short motif at tyrosine 195 to aspartate 198 is the YXDD element. In terms of domain architecture, RNase H type-1 spans leucine 460–isoleucine 590. Positions 469, 497, 517, and 582 each coordinate Mg(2+). The Integrase-type zinc-finger motif lies at serine 587–glutamine 628. Zn(2+) contacts are provided by histidine 596, histidine 600, cysteine 624, and cysteine 627. Residues alanine 637–lysine 803 form the Integrase catalytic domain.

This sequence belongs to the beta type-B retroviral polymerase family. HERV class-II K(HML-2) pol subfamily.

The catalysed reaction is DNA(n) + a 2'-deoxyribonucleoside 5'-triphosphate = DNA(n+1) + diphosphate. It catalyses the reaction Endonucleolytic cleavage to 5'-phosphomonoester.. Functionally, early post-infection, the reverse transcriptase converts the viral RNA genome into double-stranded viral DNA. The RNase H domain of the reverse transcriptase performs two functions. It degrades the RNA template and specifically removes the RNA primer from the RNA/DNA hybrid. Following nuclear import, the integrase catalyzes the insertion of the linear, double-stranded viral DNA into the host cell chromosome. Endogenous Pol proteins may have kept, lost or modified their original function during evolution. The protein is Endogenous retrovirus group K member 18 Pol protein (ERVK-18) of Homo sapiens (Human).